Reading from the N-terminus, the 252-residue chain is Major prion protein (252 aa).

The first 22 residues, 1–22 (MANLGCWMLVLFVATWSDLGLC), serve as a signal peptide directing secretion. The interaction with ADGRG6 stretch occupies residues 23 to 38 (KKRPKPGGWNTGGSRY). An interaction with GRB2, ERI3 and SYN1 region spans residues 23-229 (KKRPKPGGWN…ESQAYYQRGS (207 aa)). The segment at 26–106 (PKPGGWNTGG…QWNKPSKPKT (81 aa)) is disordered. 5 repeat units span residues 51 to 58 (PQGGGWGQ), 59 to 66 (PHGGGWGQ), 67 to 74 (PHGGGWGQ), 75 to 82 (PHGGSWGQ), and 83 to 90 (PHGGGWGQ). The 5 X 8 AA tandem repeats of P-H-G-G-G-W-G-Q stretch occupies residues 51 to 90 (PQGGGWGQPHGGGWGQPHGGGWGQPHGGSWGQPHGGGWGQ). Positions 52-94 (QGGGWGQPHGGGWGQPHGGGWGQPHGGSWGQPHGGGWGQGGGT) are enriched in gly residues. Residues histidine 60, glycine 61, glycine 62, histidine 68, glycine 69, glycine 70, histidine 76, glycine 77, glycine 78, histidine 84, glycine 85, and glycine 86 each contribute to the Cu(2+) site. Cysteine 178 and cysteine 213 form a disulfide bridge. N-linked (GlcNAc...) asparagine glycosylation is found at asparagine 180 and asparagine 196. Serine 229 carries GPI-anchor amidated serine lipidation. The propeptide at 230 to 252 (SMVLFSSPPVILLISFLIFLIVG) is removed in mature form.

The protein belongs to the prion family. In terms of assembly, monomer and homodimer. Has a tendency to aggregate into amyloid fibrils containing a cross-beta spine, formed by a steric zipper of superposed beta-strands. Soluble oligomers may represent an intermediate stage on the path to fibril formation. Copper binding may promote oligomerization. Interacts with GRB2, APP, ERI3/PRNPIP and SYN1. Mislocalized cytosolically exposed PrP interacts with MGRN1; this interaction alters MGRN1 subcellular location and causes lysosomal enlargement. Interacts with APP. Interacts with KIAA1191. Interacts with ADGRG6.

The protein resides in the cell membrane. The protein localises to the golgi apparatus. Its function is as follows. Its primary physiological function is unclear. May play a role in neuronal development and synaptic plasticity. May be required for neuronal myelin sheath maintenance. May promote myelin homeostasis through acting as an agonist for ADGRG6 receptor. May play a role in iron uptake and iron homeostasis. Soluble oligomers are toxic to cultured neuroblastoma cells and induce apoptosis (in vitro). Association with GPC1 (via its heparan sulfate chains) targets PRNP to lipid rafts. Also provides Cu(2+) or Zn(2+) for the ascorbate-mediated GPC1 deaminase degradation of its heparan sulfate side chains. This is Major prion protein (PRNP) from Sapajus apella (Brown-capped capuchin).